Here is a 475-residue protein sequence, read N- to C-terminus: Protein EARLY HEADING DATE 2 (475 aa).

The segment covering 1 to 16 (MLLSDLSSDQEATGSN) has biased composition (polar residues). The segment at 1–26 (MLLSDLSSDQEATGSNSHGGGGGDRM) is disordered. 2 consecutive C2H2-type zinc fingers follow at residues 105 to 127 (FVCEVCNKGFQRDQNLQLHRRGH) and 155 to 185 (YVCPEPTCVHHDPARALGDLTGIKKHFSRKH). Short sequence motifs (nuclear localization signal) lie at residues 123–130 (HRRGHNLP) and 177–184 (IKKHFSRK). The C2H2-type 2; degenerate zinc-finger motif lies at 190–213 (WRCERCGKRYAVHSDWKAHVKNCG). The Zn(2+) site is built by cysteine 192, cysteine 195, histidine 208, cysteine 212, cysteine 219, cysteine 221, histidine 234, and cysteine 238. A CCHC-type 2; atypical zinc finger spans residues 217–240 (YRCDCGILFSRKDSLLTHRAFCDA). The interval 227 to 239 (RKDSLLTHRAFCD) is SHR-binding.

In terms of tissue distribution, mostly expressed in developing leaves (more in sheaths than in blades, especially in the outer epidermal cell of immature leaves and in the region immediately beneath the meristem where internodes are visible) and panicles, and, at very low levels, around the shoot apex and in roots.

The protein resides in the nucleus. Transcription activator that acts as a flowering master switch in both long and short days, independently of the circadian clock. Promotes flowering upstream of HD1 by up-regulating FTL1, FTL4, FTL5, FTL6, EHD1, HD3A and RFT1. Seems to repress FTL11 expression. May recognize the consensus motif 5'-TTTGTCGTAAT-3' in target gene promoters. The sequence is that of Protein EARLY HEADING DATE 2 from Oryza sativa subsp. japonica (Rice).